The primary structure comprises 412 residues: MEFNSEFLATLCARGYLHQLTDATALDGIMSSGAVTAYIGFDCTANSLHIGSLMQIMLLRYLQRFGHKPIVLLGGATTKVGDPSGKEKTRAMLSEDNISANKEGILRVIKKFLSEDVVVVDNAEWLGNYGYLDFLREIGSKFSVNVMLGLESVKSRLSRDQQLSFLEFSYVLLQSYDFVELHKRYGCILQIGGSDQWGNIVSGIDLARKMGCPQLYGVTTPLLLNSSGAKMGKTADGAIWLDETLYSPYNYWQYFRNVPDQDVGRLLRLFTELPLSEIERLEALKGEELNEAKKILATAVTSICHGAEVALQVENQALKVFEHNDHDELRSITFSRKTLGQGIPISKLLHMWGLEESISAGRRLIRGGGCKINGGVVLDEEKLLNCGDFDDNGGYVAVFCGKKRRLKVVLED.

Residue Tyr38 participates in L-tyrosine binding. Positions 43 to 52 match the 'HIGH' region motif; it reads CTANSLHIGS. Residues Tyr170 and Gln174 each coordinate L-tyrosine. The short motif at 230–234 is the 'KMSKS' region element; it reads KMGKT. Lys233 contacts ATP. In terms of domain architecture, S4 RNA-binding spans 343–409; the sequence is IPISKLLHMW…CGKKRRLKVV (67 aa).

Belongs to the class-I aminoacyl-tRNA synthetase family. TyrS type 1 subfamily. Homodimer.

The protein localises to the cytoplasm. It catalyses the reaction tRNA(Tyr) + L-tyrosine + ATP = L-tyrosyl-tRNA(Tyr) + AMP + diphosphate + H(+). In terms of biological role, catalyzes the attachment of tyrosine to tRNA(Tyr) in a two-step reaction: tyrosine is first activated by ATP to form Tyr-AMP and then transferred to the acceptor end of tRNA(Tyr). This Anaplasma phagocytophilum (strain HZ) protein is Tyrosine--tRNA ligase.